Here is a 208-residue protein sequence, read N- to C-terminus: Probable nicotinate-nucleotide adenylyltransferase (208 aa).

This sequence belongs to the NadD family.

The enzyme catalyses nicotinate beta-D-ribonucleotide + ATP + H(+) = deamido-NAD(+) + diphosphate. It functions in the pathway cofactor biosynthesis; NAD(+) biosynthesis; deamido-NAD(+) from nicotinate D-ribonucleotide: step 1/1. Functionally, catalyzes the reversible adenylation of nicotinate mononucleotide (NaMN) to nicotinic acid adenine dinucleotide (NaAD). This Acidothermus cellulolyticus (strain ATCC 43068 / DSM 8971 / 11B) protein is Probable nicotinate-nucleotide adenylyltransferase.